The primary structure comprises 183 residues: Adenine phosphoribosyltransferase (183 aa).

This sequence belongs to the purine/pyrimidine phosphoribosyltransferase family. Homodimer.

Its subcellular location is the cytoplasm. It catalyses the reaction AMP + diphosphate = 5-phospho-alpha-D-ribose 1-diphosphate + adenine. It participates in purine metabolism; AMP biosynthesis via salvage pathway; AMP from adenine: step 1/1. In terms of biological role, catalyzes a salvage reaction resulting in the formation of AMP, that is energically less costly than de novo synthesis. In Shewanella pealeana (strain ATCC 700345 / ANG-SQ1), this protein is Adenine phosphoribosyltransferase.